Consider the following 533-residue polypeptide: Probable anion transporter 4, chloroplastic (533 aa).

Helical transmembrane passes span M117–V137, I152–V172, V179–A199, L203–C223, I243–M263, G267–L287, V342–I362, A376–W396, I417–V437, A438–I458, M474–V494, and G502–A522.

Belongs to the major facilitator superfamily. Sodium/anion cotransporter (TC 2.A.1.14) family. Expressed in leaf veins and root tips.

The protein localises to the plastid. The protein resides in the chloroplast membrane. In terms of biological role, inorganic phosphate and probable anion transporter. In Arabidopsis thaliana (Mouse-ear cress), this protein is Probable anion transporter 4, chloroplastic (ANTR4).